Here is a 236-residue protein sequence, read N- to C-terminus: MQKLEELYSGKAKSIFKTDDADLFVMEFRDDTSAFDGVKKAKLSRKGEVNNKFNAFIMSKLAEAGVPVHFVRLLSERESLVKRLQMIPVECVVRNVAAGSLCRRLGVREGMVLTPPTYELFLKNDELHDPMINEHHARAFGWATDAQLEEMKALTFKVNDILKALFDAAGMTLVDYKLEFGLIDGKVTLGDEFSPDGCRIWDKATGEKMDKDRFRQDLGDVIEYYEEVGRRLGVQF.

The protein belongs to the SAICAR synthetase family.

It catalyses the reaction 5-amino-1-(5-phospho-D-ribosyl)imidazole-4-carboxylate + L-aspartate + ATP = (2S)-2-[5-amino-1-(5-phospho-beta-D-ribosyl)imidazole-4-carboxamido]succinate + ADP + phosphate + 2 H(+). It functions in the pathway purine metabolism; IMP biosynthesis via de novo pathway; 5-amino-1-(5-phospho-D-ribosyl)imidazole-4-carboxamide from 5-amino-1-(5-phospho-D-ribosyl)imidazole-4-carboxylate: step 1/2. This Hahella chejuensis (strain KCTC 2396) protein is Phosphoribosylaminoimidazole-succinocarboxamide synthase.